A 112-amino-acid chain; its full sequence is Frizzy aggregation protein FrzB (112 aa).

In terms of biological role, necessary for proper aggregation of cells to form fruiting bodies. FRZ genes define a system of signal transduction analogous to the enterobacterial chemotaxis systems. The protein is Frizzy aggregation protein FrzB (frzB) of Myxococcus xanthus.